The following is a 420-amino-acid chain: Serine palmitoyltransferase (420 aa).

Residues Gly134–Tyr135, His234, Thr262, and Ser264 each bind pyridoxal 5'-phosphate. Lys265 is modified (N6-(pyridoxal phosphate)lysine).

Belongs to the class-II pyridoxal-phosphate-dependent aminotransferase family. In terms of assembly, homodimer. The cofactor is pyridoxal 5'-phosphate.

It is found in the cytoplasm. The enzyme catalyses L-serine + hexadecanoyl-CoA + H(+) = 3-oxosphinganine + CO2 + CoA. Its pathway is lipid metabolism; sphingolipid metabolism. Not inhibited by relatively high concentrations of palmitoyl-CoA. Inhibited by both D-cycloserine (DCS) and L-cycloserine (LCS), which inactivate SPT by transamination to form a free pyridoxamine 5'-phosphate (PMP) and beta-aminooxyacetaldehyde that remain bound at the active site. Inhibition is reversed by incubation with excess pyridoxal phosphate. Inhibited by the fungal natural product myriocin, which acts as a competitive inhibitor for both L-serine and palmitoyl-CoA substrates. Its function is as follows. Catalyzes the condensation of L-serine with palmitoyl-CoA (hexadecanoyl-CoA) to produce 3-oxosphinganine. Exhibits a broad substrate specificity concerning the chain length and the degree of unsaturation of acyl-CoA. This Sphingomonas paucimobilis (Pseudomonas paucimobilis) protein is Serine palmitoyltransferase.